A 688-amino-acid polypeptide reads, in one-letter code: Protein sel-1 homolog 2 (688 aa).

The first 18 residues, 1-18 (MNPLALLVEILIIIEVTT), serve as a signal peptide directing secretion. Over 19 to 662 (KNSEAERYNR…KWKWLKLDST (644 aa)) the chain is Extracellular. Residue Asn-34 is glycosylated (N-linked (GlcNAc...) asparagine). 11 Sel1-like repeats span residues 107–142 (GDELFKMGNKILQESKSQKQKTEAYTFFTRAADMGN), 143–178 (LKAMEKMADALLFGSFGMQNITAAIQLYESLAKEGS), 179–214 (YKAQNALGFLSSYGIGMEYDQAKALIYYTFGSAGGS), 215–250 (MMSQMILGYRYLSGINVLQNCEVALNHYKKVADYIA), 297–333 (VQIQVSLGQLHLIGRKGLDQDYSKALYYFLKAAKAGS), 334–370 (ANAMAFIGKMYLEGNAAAPQNNATAFKYFSMAASKGN), 371–406 (AIGLHGLGLLYFHGKGVPVNYGEALKYFQKAAEKGW), 407–442 (PNAQFHLGFMYYSGSGVWKDYKLAFKYFYLASQSGQ), 443–478 (PLAIYYLAEMYATGTGVLRSCRTAVEPYKGVCELGH), 551–586 (AFARVKIGDYHYYGYGTKKDYETAATHYSIAADKHH), and 588–623 (AQAMFNLAYMYEHGLGIAQDIHLARRLYDMAAQTSP). N-linked (GlcNAc...) asparagine glycosylation occurs at Asn-162. Residues 663–683 (IGPYWDLLVIGLIVVVLIFLL) form a helical membrane-spanning segment. Residues 684–688 (RNHHR) are Cytoplasmic-facing.

The protein belongs to the sel-1 family.

Its subcellular location is the membrane. It is found in the cell projection. The protein localises to the cilium. It localises to the nucleus speckle. In Rattus norvegicus (Rat), this protein is Protein sel-1 homolog 2 (Sel1l2).